A 138-amino-acid polypeptide reads, in one-letter code: Putative pre-16S rRNA nuclease (138 aa).

The protein belongs to the YqgF nuclease family.

The protein localises to the cytoplasm. Its function is as follows. Could be a nuclease involved in processing of the 5'-end of pre-16S rRNA. The protein is Putative pre-16S rRNA nuclease of Klebsiella pneumoniae (strain 342).